Here is a 111-residue protein sequence, read N- to C-terminus: PCNA-associated factor (111 aa).

The span at 1 to 10 shows a compositional bias: polar residues; that stretch reads MVRTKANSVP. A disordered region spans residues 1–111; the sequence is MVRTKANSVP…PPDHTDDEKE (111 aa). At serine 8 the chain carries Phosphoserine. Lysine 15 participates in a covalent cross-link: Glycyl lysine isopeptide (Lys-Gly) (interchain with G-Cter in ubiquitin). A D-box motif is present at residues 23–34; sequence RKVLGSSTSAAN. An N6-acetyllysine; alternate modification is found at lysine 24. Lysine 24 is covalently cross-linked (Glycyl lysine isopeptide (Lys-Gly) (interchain with G-Cter in ubiquitin); alternate). Residues 27 to 39 show a composition bias toward polar residues; sequence GSSTSAANSTPLS. Phosphoserine occurs at positions 28, 31, and 72. The short motif at 62-72 is the PIP-box element; that stretch reads QKGIGEFFSLS. Residues 74 to 84 show a composition bias toward basic and acidic residues; it reads KDSEKENRIPE. The short motif at 78–80 is the KEN box element; it reads KEN. The Initiation motif signature appears at 85–97; it reads EAGSSGLGKAKRK.

As to quaternary structure, interacts (when monoubiquitinated at Lys-15 and Lys-24) with PCNA. Interacts with isoform 2/p33ING1b of ING1. Interacts with BRCA1. Post-translationally, monoubiquitinated at Lys-15 and Lys-24 during normal S phase, promoting its association with PCNA. Also diubiquitinated at these 2 sites. Following DNA damage, monoubiquitin chains at Lys-15 and Lys-24 are probably extended, leading to disrupt the interaction with PCNA. Polyubiquitinated by the APC/C complex at the mitotic exit, leading to its degradation by the proteasome.

The protein localises to the nucleus. The protein resides in the cytoplasm. Its subcellular location is the perinuclear region. In terms of biological role, PCNA-binding protein that acts as a regulator of DNA repair during DNA replication. Following DNA damage, the interaction with PCNA is disrupted, facilitating the interaction between monoubiquitinated PCNA and the translesion DNA synthesis DNA polymerase eta (POLH) at stalled replisomes, facilitating the bypass of replication-fork-blocking lesions. Also acts as a regulator of centrosome number. The sequence is that of PCNA-associated factor from Bos taurus (Bovine).